A 392-amino-acid polypeptide reads, in one-letter code: Caveolae-associated protein 1 (392 aa).

Residue Met1 is modified to N-acetylmethionine. The span at 1 to 10 (MEDVTLHIVE) shows a compositional bias: basic and acidic residues. Positions 1-45 (MEDVTLHIVERPYSGFPDASSEGPEPTQGEARATEEPSGTGSDEL) are disordered. Positions 1-100 (MEDVTLHIVE…IQGELSKLGK (100 aa)) are required for homotrimerization and for interaction with CAVIN2 and CAVIN3. Phosphoserine occurs at positions 21 and 38. Thr40 is subject to Phosphothreonine. A phosphoserine mark is found at Ser42 and Ser48. The segment at 54-64 (VLVLSLLDKII) is nuclear export signal. The tract at residues 55–77 (LVLSLLDKIIGAVDQIQLTQAQL) is leucine-zipper 1. Lys118 participates in a covalent cross-link: Glycyl lysine isopeptide (Lys-Gly) (interchain with G-Cter in SUMO2). Ser120 carries the post-translational modification Phosphoserine. Lys124 is covalently cross-linked (Glycyl lysine isopeptide (Lys-Gly) (interchain with G-Cter in SUMO2)). The tract at residues 138 to 154 (KKLEVNEAELLRRRNFK) is nuclear localization signal. Residue Tyr158 is modified to Phosphotyrosine. Residue Lys163 forms a Glycyl lysine isopeptide (Lys-Gly) (interchain with G-Cter in SUMO1); alternate linkage. A Glycyl lysine isopeptide (Lys-Gly) (interchain with G-Cter in SUMO2); alternate cross-link involves residue Lys163. Lys167 participates in a covalent cross-link: Glycyl lysine isopeptide (Lys-Gly) (interchain with G-Cter in SUMO2). Residues 168–188 (LSVSKSLKESEALPEKEGDEL) form a leucine-zipper 2 region. Phosphoserine occurs at positions 169 and 171. Lys172 participates in a covalent cross-link: Glycyl lysine isopeptide (Lys-Gly) (interchain with G-Cter in SUMO2). 2 positions are modified to phosphoserine: Ser173 and Ser177. The span at 173–183 (SLKESEALPEK) shows a compositional bias: basic and acidic residues. Residues 173 to 197 (SLKESEALPEKEGDELGEGERPEDD) form a disordered region. A compositionally biased stretch (acidic residues) spans 184–197 (EGDELGEGERPEDD). Thr198 carries the post-translational modification Phosphothreonine. Residues 201–284 (IELSSDEAVE…RMNKLGTRLV (84 aa)) adopt a coiled-coil conformation. Phosphoserine occurs at positions 204 and 205. The nuclear localization signal stretch occupies residues 235–251 (KKAFSKEKMEKTKVRTR). The segment at 259-299 (LKTKENLEKTRHTLEKRMNKLGTRLVPVERREKLKTSRDKL) is leucine-zipper 3. Phosphoserine is present on Ser302. Position 304 is a phosphothreonine (Thr304). A Phosphotyrosine modification is found at Tyr310. Lys328 participates in a covalent cross-link: Glycyl lysine isopeptide (Lys-Gly) (interchain with G-Cter in SUMO2). Positions 347–367 (GPEDDEVGAERGEATDLLRGS) are disordered. A phosphoserine mark is found at Ser367, Ser368, Ser381, Ser389, and Ser391.

Belongs to the CAVIN family. As to quaternary structure, component of the CAVIN complex composed of CAVIN1, CAVIN2, CAVIN3 and CAVIN4. Homotrimer. Interacts with LIPE in the adipocyte cytoplasm. Interacts with RNA polymerase I subunit POLR1A/RPA1. Interacts with TTF1. Binds the 3' end of pre-rRNA. Interacts with transcription factor ZNF148. Interacts with CAV1, CAVIN2 and CAVIN3. Interacts with CAVIN4. Phosphorylated. Present in active and inactive forms. Changes in phosphorylation pattern may alter activity. Phosphorylation at Tyr-158 is essential for its function in the regulation of the ribosomal transcriptional activity. In terms of processing, monoubiquitinated. As to expression, expressed in the heart, stomach, adipose tissue and lung (at protein level). Expressed in testis, kidney, muscle, liver, spleen and brain.

It is found in the membrane. It localises to the caveola. The protein localises to the cell membrane. Its subcellular location is the microsome. The protein resides in the endoplasmic reticulum. It is found in the cytoplasm. It localises to the cytosol. The protein localises to the mitochondrion. Its subcellular location is the nucleus. Functionally, plays an important role in caveolae formation and organization. Essential for the formation of caveolae in all tissues. Core component of the CAVIN complex which is essential for recruitment of the complex to the caveolae in presence of calveolin-1 (CAV1). Essential for normal oligomerization of CAV1. Promotes ribosomal transcriptional activity in response to metabolic challenges in the adipocytes and plays an important role in the formation of the ribosomal transcriptional loop. Dissociates transcription complexes paused by DNA-bound TTF1, thereby releasing both RNA polymerase I and pre-RNA from the template. The caveolae biogenesis pathway is required for the secretion of proteins such as GASK1A. The protein is Caveolae-associated protein 1 (Cavin1) of Mus musculus (Mouse).